The primary structure comprises 202 residues: Histone H1 (202 aa).

2 disordered regions span residues 1 to 50 (MTAI…VTHP) and 114 to 202 (YKLS…KIAV). The span at 18 to 38 (EASKVKEQAPATDKKPRAPKE) shows a compositional bias: basic and acidic residues. The H15 domain maps to 48–118 (THPPYFQMIK…KIKASYKLSE (71 aa)). A compositionally biased stretch (basic residues) spans 160-202 (KAKATPKPKKVGAKRTRKSTPAKAKQPKSIKSPAAKRAKKIAV).

Belongs to the histone H1/H5 family.

Its subcellular location is the nucleus. The protein localises to the chromosome. Its function is as follows. Histones H1 are necessary for the condensation of nucleosome chains into higher-order structures. The protein is Histone H1 of Solanum pennellii (Tomato).